Consider the following 518-residue polypeptide: Sodium-dependent glucose transporter 1 (518 aa).

12 helical membrane-spanning segments follow: residues 19–39 (TFQDLATNVNRNISSLSFIFV), 53–73 (GFLVDVMNYFLLLGISMSATT), 82–102 (CKTAILLTVMMSIFGVSIGIL), 107–127 (NVLILAIWGDKGAPHMQALHF), 139–159 (LAKLALGPTASAENHTESDFH), 221–241 (FRRAKYHNALLCLLFLFFFFY), 307–327 (TSSLFLVLFDKNPICLWIATS), 347–367 (YTTIHGKSAAFFVIGASLGEM), 376–396 (LQGKYPDLPVVLYTSLGASIA), 400–420 (LFPVLYKLATSPLDRQRKEDR), 438–458 (EEENEEEDAEKWNEMDFEMIE), and 466–486 (SIIETSRSSLTEPTAEVYNQY). A compositionally biased stretch (basic and acidic residues) spans 414-426 (RQRKEDRKSEDQK). The tract at residues 414–448 (RQRKEDRKSEDQKALLSSSGLNEYEEENEEEDAEK) is disordered. Over residues 436–448 (EYEEENEEEDAEK) the composition is skewed to acidic residues.

It belongs to the major facilitator superfamily.

Its subcellular location is the apical cell membrane. May function as a sodium-dependent glucose transporter. Potential channels for urea in the inner medulla of kidney. The chain is Sodium-dependent glucose transporter 1 from Homo sapiens (Human).